The following is a 153-amino-acid chain: MAL-like protein (153 aa).

A run of 4 helical transmembrane segments spans residues 22–42 (LFLT…FLVW), 59–79 (VMYV…SYLF), 97–117 (GTTG…TIVS), and 131–151 (AASF…FSIY). The 132-residue stretch at 22 to 153 (LFLTIPFAFF…ILHAFSIYYH (132 aa)) folds into the MARVEL domain.

It belongs to the MAL family.

Its subcellular location is the membrane. This is MAL-like protein (MALL) from Homo sapiens (Human).